We begin with the raw amino-acid sequence, 210 residues long: Cuticle collagen 2C (210 aa).

A disordered region spans residues Cys11–Arg210. 2 stretches are compositionally biased toward pro residues: residues Pro40 to Pro76 and Asp88 to Pro103. The segment covering Lys105–Glu122 has biased composition (low complexity). The span at Pro123–Asn144 shows a compositional bias: pro residues. The span at His167 to Gln179 shows a compositional bias: low complexity.

It belongs to the cuticular collagen family.

In terms of biological role, nematode cuticles are composed largely of collagen-like proteins. The cuticle functions both as an exoskeleton and as a barrier to protect the worm from its environment. This is Cuticle collagen 2C (2C) from Haemonchus contortus (Barber pole worm).